We begin with the raw amino-acid sequence, 170 residues long: Ureidoglycolate lyase (170 aa).

The protein belongs to the ureidoglycolate lyase family. As to quaternary structure, homodimer. It depends on Ni(2+) as a cofactor.

It catalyses the reaction (S)-ureidoglycolate = urea + glyoxylate. It functions in the pathway nitrogen metabolism; (S)-allantoin degradation. In terms of biological role, catalyzes the catabolism of the allantoin degradation intermediate (S)-ureidoglycolate, generating urea and glyoxylate. Involved in the utilization of allantoin as nitrogen source. The protein is Ureidoglycolate lyase of Stutzerimonas stutzeri (strain A1501) (Pseudomonas stutzeri).